Reading from the N-terminus, the 210-residue chain is 7-cyano-7-deazaguanine synthase 2 (210 aa).

10–20 is a binding site for ATP; sequence HSGGMDSTTCL. Cysteine 180, cysteine 193, cysteine 196, and cysteine 199 together coordinate Zn(2+).

This sequence belongs to the QueC family. It depends on Zn(2+) as a cofactor.

It catalyses the reaction 7-carboxy-7-deazaguanine + NH4(+) + ATP = 7-cyano-7-deazaguanine + ADP + phosphate + H2O + H(+). It functions in the pathway purine metabolism; 7-cyano-7-deazaguanine biosynthesis. Catalyzes the ATP-dependent conversion of 7-carboxy-7-deazaguanine (CDG) to 7-cyano-7-deazaguanine (preQ(0)). The sequence is that of 7-cyano-7-deazaguanine synthase 2 from Rhodopseudomonas palustris (strain HaA2).